Consider the following 452-residue polypeptide: Sulfide:quinone oxidoreductase, mitochondrial (452 aa).

FAD is bound by residues 54-55 (AG), glutamate 77, glutamine 85, and valine 120. Catalysis depends on cysteine 204, which acts as the Cysteine persulfide intermediate. An intrachain disulfide couples cysteine 204 to cysteine 380. Residues aspartate 337 and 345 to 348 (KTAA) contribute to the FAD site. Residue cysteine 380 is the Cysteine persulfide intermediate of the active site.

The protein belongs to the SQRD family. It depends on FAD as a cofactor.

It localises to the mitochondrion. It catalyses the reaction ubiquinone-10 + hydrogen sulfide + sulfite + 2 H(+) = ubiquinol-10 + thiosulfate. It carries out the reaction a quinone + hydrogen sulfide + glutathione + H(+) = S-sulfanylglutathione + a quinol. Its function is as follows. Catalyzes the oxidation of hydrogen sulfide, with the help of a quinone. The polypeptide is Sulfide:quinone oxidoreductase, mitochondrial (Dictyostelium discoideum (Social amoeba)).